Consider the following 125-residue polypeptide: Translation initiation factor 5A (125 aa).

At Lys35 the chain carries Hypusine.

This sequence belongs to the eIF-5A family.

Its subcellular location is the cytoplasm. Functions by promoting the formation of the first peptide bond. The protein is Translation initiation factor 5A (eIF5A) of Methanoregula boonei (strain DSM 21154 / JCM 14090 / 6A8).